A 600-amino-acid chain; its full sequence is DNA polymerase alpha subunit B (600 aa).

Residues 112–167 (AYTTPSKGPHKRVSSTPETPLTKRSISTRSPHQLLSPSSFSPSATPSQKYSSRTNR) are disordered. Polar residues predominate over residues 125–140 (SSTPETPLTKRSISTR). Phosphoserine is present on Ser126. Phosphothreonine occurs at positions 127 and 130. Phosphoserine occurs at positions 141, 147, 152, and 154. Over residues 141–158 (SPHQLLSPSSFSPSATPS) the composition is skewed to low complexity.

Belongs to the DNA polymerase alpha subunit B family. Component of the alpha DNA polymerase complex (also known as the alpha DNA polymerase-primase complex) consisting of four subunits: the catalytic subunit POLA1, the regulatory subunit POLA2, and the primase complex subunits PRIM1 and PRIM2 respectively. Within the complex, POLA1 directly interacts with PRIM2. Post-translationally, phosphorylated in a cell cycle-dependent manner, in G2/M phase.

The protein localises to the nucleus. In terms of biological role, accessory subunit of the DNA polymerase alpha complex (also known as the alpha DNA polymerase-primase complex) which plays an essential role in the initiation of DNA synthesis. During the S phase of the cell cycle, the DNA polymerase alpha complex (composed of a catalytic subunit POLA1, an accessory subunit POLA2 and two primase subunits, the catalytic subunit PRIM1 and the regulatory subunit PRIM2) is recruited to DNA at the replicative forks via direct interactions with MCM10 and WDHD1. The primase subunit of the polymerase alpha complex initiates DNA synthesis by oligomerising short RNA primers on both leading and lagging strands. These primers are initially extended by the polymerase alpha catalytic subunit and subsequently transferred to polymerase delta and polymerase epsilon for processive synthesis on the lagging and leading strand, respectively. This is DNA polymerase alpha subunit B (Pola2) from Rattus norvegicus (Rat).